The chain runs to 103 residues: Large ribosomal subunit protein bL21 (103 aa).

This sequence belongs to the bacterial ribosomal protein bL21 family. In terms of assembly, part of the 50S ribosomal subunit. Contacts protein L20.

In terms of biological role, this protein binds to 23S rRNA in the presence of protein L20. The sequence is that of Large ribosomal subunit protein bL21 from Cupriavidus pinatubonensis (strain JMP 134 / LMG 1197) (Cupriavidus necator (strain JMP 134)).